We begin with the raw amino-acid sequence, 309 residues long: uncharacterized protein (309 aa).

The region spanning 1–60 (MKPLLDVLMILDALEKEGSFAAASAKLYKTPSALSYTVHKLESDLNIQLLDRSGHRAKFT) is the HTH lysR-type domain. The segment at residues 20 to 39 (FAAASAKLYKTPSALSYTVH) is a DNA-binding region (H-T-H motif).

It belongs to the LysR transcriptional regulatory family.

This is an uncharacterized protein from Escherichia coli (strain K12).